A 159-amino-acid polypeptide reads, in one-letter code: 2-C-methyl-D-erythritol 2,4-cyclodiphosphate synthase (159 aa).

Residues D10 and H12 each coordinate a divalent metal cation. Residues 10-12 and 37-38 contribute to the 4-CDP-2-C-methyl-D-erythritol 2-phosphate site; these read DVH and HS. H45 is an a divalent metal cation binding site. 4-CDP-2-C-methyl-D-erythritol 2-phosphate-binding positions include 59-61, 64-68, 103-109, 135-138, F142, and R145; these read DIG, FLDTD, AQAPKML, and TTTE.

Belongs to the IspF family. Homotrimer. A divalent metal cation is required as a cofactor.

The catalysed reaction is 4-CDP-2-C-methyl-D-erythritol 2-phosphate = 2-C-methyl-D-erythritol 2,4-cyclic diphosphate + CMP. It participates in isoprenoid biosynthesis; isopentenyl diphosphate biosynthesis via DXP pathway; isopentenyl diphosphate from 1-deoxy-D-xylulose 5-phosphate: step 4/6. In terms of biological role, involved in the biosynthesis of isopentenyl diphosphate (IPP) and dimethylallyl diphosphate (DMAPP), two major building blocks of isoprenoid compounds. Catalyzes the conversion of 4-diphosphocytidyl-2-C-methyl-D-erythritol 2-phosphate (CDP-ME2P) to 2-C-methyl-D-erythritol 2,4-cyclodiphosphate (ME-CPP) with a corresponding release of cytidine 5-monophosphate (CMP). The sequence is that of 2-C-methyl-D-erythritol 2,4-cyclodiphosphate synthase from Francisella tularensis subsp. holarctica (strain OSU18).